The sequence spans 325 residues: 8-oxo-dGDP phosphatase NUDT18 (325 aa).

Residues 38-163 enclose the Nudix hydrolase domain; sequence NVCYIVGAVI…DILSLIDAGL (126 aa). L55 contacts Mg(2+). The short motif at 73-94 is the Nudix box element; the sequence is GRMEECESILEALQREVREEAG.

It belongs to the Nudix hydrolase family. Mn(2+) is required as a cofactor. Requires Mg(2+) as cofactor.

It catalyses the reaction 8-oxo-dGDP + H2O = 8-oxo-dGMP + phosphate + H(+). It carries out the reaction 8-oxo-dADP + H2O = 8-oxo-dAMP + phosphate + H(+). The enzyme catalyses 2-oxo-dADP + H2O = 2-oxo-dAMP + phosphate + H(+). The catalysed reaction is 8-oxo-GDP + H2O = 8-oxo-GMP + phosphate + H(+). In terms of biological role, mediates the hydrolysis of oxidized nucleoside diphosphate derivatives. Hydrolyzes 8-oxo-7,8-dihydroguanine (8-oxo-Gua)-containing deoxyribo- and ribonucleoside diphosphates to the monophosphates. Hydrolyzes 8-oxo-dGDP and 8-oxo-GDP with the same efficiencies. Also hydrolyzes 8-OH-dADP and 2-OH-dADP. Exhibited no or minimal hydrolysis activity against 8-oxo-dGTP, 8-oxo-GTP, dGTP, GTP, dGDP and GDP. Probably removes oxidized guanine nucleotides from both the DNA and RNA precursor pools. The protein is 8-oxo-dGDP phosphatase NUDT18 (nudt18) of Danio rerio (Zebrafish).